The chain runs to 467 residues: Glutamate--tRNA ligase (467 aa).

Residues 9-19 (PSPTGFLHIGG) carry the 'HIGH' region motif. The short motif at 250-254 (KLSKR) is the 'KMSKS' region element. An ATP-binding site is contributed by lysine 253.

Belongs to the class-I aminoacyl-tRNA synthetase family. Glutamate--tRNA ligase type 1 subfamily. As to quaternary structure, monomer.

The protein localises to the cytoplasm. The enzyme catalyses tRNA(Glu) + L-glutamate + ATP = L-glutamyl-tRNA(Glu) + AMP + diphosphate. Functionally, catalyzes the attachment of glutamate to tRNA(Glu) in a two-step reaction: glutamate is first activated by ATP to form Glu-AMP and then transferred to the acceptor end of tRNA(Glu). This is Glutamate--tRNA ligase from Mesomycoplasma hyopneumoniae (strain 232) (Mycoplasma hyopneumoniae).